We begin with the raw amino-acid sequence, 867 residues long: Elongation factor 2 (867 aa).

A tr-type G domain is found at 17–368; sequence HNIRNLSVVA…MIVLHLPSPV (352 aa). 26 to 33 is a GTP binding site; the sequence is AHVDHGKS. Phosphothreonine occurs at positions 57 and 59. GTP contacts are provided by residues 176–179 and 231–233; these read NKLD and SGL. Position 723 is a diphthamide (H723).

The protein belongs to the TRAFAC class translation factor GTPase superfamily. Classic translation factor GTPase family. EF-G/EF-2 subfamily. Post-translationally, phosphorylation by EF-2 kinase completely inactivates EF-2.

The protein localises to the cytoplasm. It carries out the reaction GTP + H2O = GDP + phosphate + H(+). Catalyzes the GTP-dependent ribosomal translocation step during translation elongation. During this step, the ribosome changes from the pre-translocational (PRE) to the post-translocational (POST) state as the newly formed A-site-bound peptidyl-tRNA and P-site-bound deacylated tRNA move to the P and E sites, respectively. Catalyzes the coordinated movement of the two tRNA molecules, the mRNA and conformational changes in the ribosome. The sequence is that of Elongation factor 2 from Blastocystis hominis.